A 138-amino-acid chain; its full sequence is Large ribosomal subunit protein uL16 (138 aa).

Over residues 1–17 (MLIPRKVKHRKQHHPRQ) the composition is skewed to basic residues. The disordered stretch occupies residues 1–22 (MLIPRKVKHRKQHHPRQRGIAS).

This sequence belongs to the universal ribosomal protein uL16 family. As to quaternary structure, part of the 50S ribosomal subunit.

Binds 23S rRNA and is also seen to make contacts with the A and possibly P site tRNAs. The chain is Large ribosomal subunit protein uL16 from Mycobacterium tuberculosis (strain ATCC 25177 / H37Ra).